A 189-amino-acid chain; its full sequence is Potassium-transporting ATPase KdpC subunit (189 aa).

The chain crosses the membrane as a helical span at residues 10–30; that stretch reads ITLVFCVFFSVFYILILWLFA.

This sequence belongs to the KdpC family. As to quaternary structure, the system is composed of three essential subunits: KdpA, KdpB and KdpC.

It is found in the cell inner membrane. Its function is as follows. Part of the high-affinity ATP-driven potassium transport (or Kdp) system, which catalyzes the hydrolysis of ATP coupled with the electrogenic transport of potassium into the cytoplasm. This subunit acts as a catalytic chaperone that increases the ATP-binding affinity of the ATP-hydrolyzing subunit KdpB by the formation of a transient KdpB/KdpC/ATP ternary complex. In Bacteroides thetaiotaomicron (strain ATCC 29148 / DSM 2079 / JCM 5827 / CCUG 10774 / NCTC 10582 / VPI-5482 / E50), this protein is Potassium-transporting ATPase KdpC subunit.